Reading from the N-terminus, the 329-residue chain is Ubiquitin carboxyl-terminal hydrolase isozyme L5 (329 aa).

One can recognise a UCH catalytic domain in the interval 7–225; that stretch reads EWCLMESDPG…IRFNLMAIVS (219 aa). Lys-47 is subject to N6-succinyllysine. Residue Cys-88 is the Nucleophile of the active site. Lys-158 bears the N6-acetyllysine mark. The Proton donor role is filled by His-164. Lys-289 bears the N6-succinyllysine mark. Residues 291 to 319 form the ULD domain; that stretch reads NYLPFIMELLKTLAEHQQLIPLVEKAKEK. Positions 313–329 are interaction with ADRM1; sequence VEKAKEKQNAKKAQETK.

This sequence belongs to the peptidase C12 family. Component of the 19S (PA700) regulatory complex of the 26S proteasome. Interacts with ADRM1 and NFRKB; in vitro ADRM1 and NFRKB compete for interaction with UCHL5. Component of the INO80 complex; specifically part of a complex module associated with N-terminus of INO80.

The protein localises to the cytoplasm. It is found in the nucleus. The enzyme catalyses Thiol-dependent hydrolysis of ester, thioester, amide, peptide and isopeptide bonds formed by the C-terminal Gly of ubiquitin (a 76-residue protein attached to proteins as an intracellular targeting signal).. Activated by ADRM1. Inhibited by interaction with NFRKB. Its function is as follows. Protease that specifically cleaves 'Lys-48'-linked polyubiquitin chains. Deubiquitinating enzyme associated with the 19S regulatory subunit of the 26S proteasome. Putative regulatory component of the INO80 complex; however is inactive in the INO80 complex and is activated by a transient interaction of the INO80 complex with the proteasome via ADRM1. The polypeptide is Ubiquitin carboxyl-terminal hydrolase isozyme L5 (UCHL5) (Homo sapiens (Human)).